The chain runs to 256 residues: Small ribosomal subunit protein uS2 (256 aa).

The stretch at 104–149 (NFKTISQRVHRLEELEALFASPEIEERPKKEQVRLKHELERLQKYL) forms a coiled coil.

This sequence belongs to the universal ribosomal protein uS2 family. As to quaternary structure, part of the 30S ribosomal subunit. Contacts protein S8.

In terms of biological role, spans the head-body hinge region of the 30S subunit. Is loosely associated with the 30S subunit. The polypeptide is Small ribosomal subunit protein uS2 (rpsB) (Thermus thermophilus (strain ATCC BAA-163 / DSM 7039 / HB27)).